The chain runs to 430 residues: Cysteate synthase (430 aa).

Residue Lys-106 is modified to N6-(pyridoxal phosphate)lysine. Pyridoxal 5'-phosphate is bound by residues Asn-132 and Thr-381.

It belongs to the threonine synthase family. Cysteate synthase subfamily. Homotrimer. It depends on pyridoxal 5'-phosphate as a cofactor.

The enzyme catalyses O-phospho-L-serine + sulfite + H(+) = L-cysteate + phosphate. Its pathway is cofactor biosynthesis; coenzyme M biosynthesis. In terms of biological role, specifically catalyzes the beta-elimination of phosphate from L-phosphoserine and the beta-addition of sulfite to the dehydroalanine intermediate to produce L-cysteate. The polypeptide is Cysteate synthase (Methanoculleus marisnigri (strain ATCC 35101 / DSM 1498 / JR1)).